Consider the following 1400-residue polypeptide: DNA-directed RNA polymerase subunit beta' (1400 aa).

Zn(2+)-binding residues include Cys70, Cys72, Cys85, and Cys88. Positions 460, 462, and 464 each coordinate Mg(2+). The Zn(2+) site is built by Cys814, Cys889, Cys896, and Cys899.

Belongs to the RNA polymerase beta' chain family. As to quaternary structure, the RNAP catalytic core consists of 2 alpha, 1 beta, 1 beta' and 1 omega subunit. When a sigma factor is associated with the core the holoenzyme is formed, which can initiate transcription. Mg(2+) serves as cofactor. Requires Zn(2+) as cofactor.

The catalysed reaction is RNA(n) + a ribonucleoside 5'-triphosphate = RNA(n+1) + diphosphate. Functionally, DNA-dependent RNA polymerase catalyzes the transcription of DNA into RNA using the four ribonucleoside triphosphates as substrates. This is DNA-directed RNA polymerase subunit beta' from Alcanivorax borkumensis (strain ATCC 700651 / DSM 11573 / NCIMB 13689 / SK2).